A 366-amino-acid chain; its full sequence is Glutathione S-transferase omega-like 3 (366 aa).

Cys46 is an active-site residue. The GST C-terminal domain maps to 197-349 (PRSLEAQITE…LGYTRSQPRV (153 aa)).

Belongs to the GST superfamily. Omega family.

It is found in the cytoplasm. It catalyses the reaction RX + glutathione = an S-substituted glutathione + a halide anion + H(+). Functionally, active as '1-Cys' thiol transferase against beta-hydroxyethyl disulfide (HED), as dehydroascorbate reductase and as dimethylarsinic acid reductase, while not active against the standard GST substrate 1-chloro-2,4-dinitrobenzene (CDNB). The chain is Glutathione S-transferase omega-like 3 (GTO3) from Saccharomyces cerevisiae (strain ATCC 204508 / S288c) (Baker's yeast).